Reading from the N-terminus, the 197-residue chain is Phospholipid hydroperoxide glutathione peroxidase (197 aa).

Serine 40 is subject to Phosphoserine. Selenocysteine 73 is a catalytic residue. Residue selenocysteine 73 is a non-standard amino acid, selenocysteine.

It belongs to the glutathione peroxidase family. In terms of assembly, monomer. Has a tendency to form higher mass oligomers. Interacts with FUNDC1; this interaction promotes GPX4 recruitment into mitochondria through TOM/TIM complex where it is degraded by mitophagy.

Its subcellular location is the mitochondrion. It is found in the cytoplasm. The enzyme catalyses a hydroperoxy polyunsaturated fatty acid + 2 glutathione = a hydroxy polyunsaturated fatty acid + glutathione disulfide + H2O. It carries out the reaction 2 glutathione + H2O2 = glutathione disulfide + 2 H2O. It catalyses the reaction tert-butyl hydroperoxide + 2 glutathione = tert-butanol + glutathione disulfide + H2O. The catalysed reaction is cumene hydroperoxide + 2 glutathione = 2-phenylpropan-2-ol + glutathione disulfide + H2O. The enzyme catalyses (9S)-hydroperoxy-(10E,12Z)-octadecadienoate + 2 glutathione = (9S)-hydroxy-(10E,12Z)-octadecadienoate + glutathione disulfide + H2O. It carries out the reaction (13S)-hydroperoxy-(9Z,11E)-octadecadienoate + 2 glutathione = (13S)-hydroxy-(9Z,11E)-octadecadienoate + glutathione disulfide + H2O. It catalyses the reaction (5S)-hydroperoxy-(6E,8Z,11Z,14Z)-eicosatetraenoate + 2 glutathione = (5S)-hydroxy-(6E,8Z,11Z,14Z)-eicosatetraenoate + glutathione disulfide + H2O. The catalysed reaction is (12R)-hydroperoxy-(5Z,8Z,10E,14Z)-eicosatetraenoate + 2 glutathione = (12R)-hydroxy-(5Z,8Z,10E,14Z)-eicosatetraenoate + glutathione disulfide + H2O. The enzyme catalyses (12S)-hydroperoxy-(5Z,8Z,10E,14Z)-eicosatetraenoate + 2 glutathione = (12S)-hydroxy-(5Z,8Z,10E,14Z)-eicosatetraenoate + glutathione disulfide + H2O. It carries out the reaction (15S)-hydroperoxy-(5Z,8Z,11Z,13E)-eicosatetraenoate + 2 glutathione = (15S)-hydroxy-(5Z,8Z,11Z,13E)-eicosatetraenoate + glutathione disulfide + H2O. It catalyses the reaction (5S)-hydroperoxy-(6E,8Z,11Z,14Z,17Z)-eicosapentaenoate + 2 glutathione = (5S)-hydroxy-(6E,8Z,11Z,14Z,17Z)-eicosapentaenoate + glutathione disulfide + H2O. The catalysed reaction is (12S)-hydroperoxy-(5Z,8Z,10E,14Z,17Z)-eicosapentaenoate + 2 glutathione = (12S)-hydroxy-(5Z,8Z,10E,14Z,17Z)-eicosapentaenoate + glutathione disulfide + H2O. The enzyme catalyses (15S)-hydroperoxy-(5Z,8Z,11Z,13E,17Z)-eicosapentaenoate + 2 glutathione = (15S)-hydroxy-(5Z,8Z,11Z,13E,17Z)-eicosapentaenoate + glutathione disulfide + H2O. It carries out the reaction (15S)-hydroperoxy-(11Z,13E)-eicosadienoate + 2 glutathione = (15S)-hydroxy-(11Z,13E)-eicosadienoate + glutathione disulfide + H2O. It catalyses the reaction (17S)-hydroperoxy-(4Z,7Z,10Z,13Z,15E,19Z)-docosahexaenoate + 2 glutathione = (17S)-hydroxy-(4Z,7Z,10Z,13Z,15E,19Z)-docosahexaenoate + glutathione disulfide + H2O. The catalysed reaction is a hydroperoxy-1,2-diacyl-glycero-3-phosphocholine + 2 glutathione = a hydroxy-1,2-diacyl-glycero-3-phosphocholine + glutathione disulfide + H2O. Essential antioxidant peroxidase that directly reduces phospholipid hydroperoxide even if they are incorporated in membranes and lipoproteins. Can also reduce fatty acid hydroperoxide, cholesterol hydroperoxide and thymine hydroperoxide. Plays a key role in protecting cells from oxidative damage by preventing membrane lipid peroxidation. Required to prevent cells from ferroptosis, a non-apoptotic cell death resulting from an iron-dependent accumulation of lipid reactive oxygen species. The presence of selenocysteine (Sec) versus Cys at the active site is essential for life: it provides resistance to overoxidation and prevents cells against ferroptosis. The presence of Sec at the active site is also essential for the survival of a specific type of parvalbumin-positive interneurons, thereby preventing against fatal epileptic seizures. May be required to protect cells from the toxicity of ingested lipid hydroperoxides. Required for normal sperm development and male fertility. Essential for maturation and survival of photoreceptor cells. Plays a role in a primary T-cell response to viral and parasitic infection by protecting T-cells from ferroptosis and by supporting T-cell expansion. Plays a role of glutathione peroxidase in platelets in the arachidonic acid metabolism. Reduces hydroperoxy ester lipids formed by a 15-lipoxygenase that may play a role as down-regulator of the cellular 15-lipoxygenase pathway. Can also reduce small soluble hydroperoxides such as H2O2, cumene hydroperoxide and tert-butyl hydroperoxide. In Hylobates lar (Lar gibbon), this protein is Phospholipid hydroperoxide glutathione peroxidase.